The primary structure comprises 143 residues: Glutamyl-tRNA(Gln) amidotransferase subunit C, chloroplastic/mitochondrial (143 aa).

This sequence belongs to the GatC family. As to quaternary structure, subunit of the heterotrimeric GatCAB amidotransferase (AdT) complex, composed of A, B and C subunits.

The protein resides in the mitochondrion. It localises to the plastid. The protein localises to the chloroplast. The enzyme catalyses L-glutamyl-tRNA(Gln) + L-glutamine + ATP + H2O = L-glutaminyl-tRNA(Gln) + L-glutamate + ADP + phosphate + H(+). Allows the formation of correctly charged Gln-tRNA(Gln) through the transamidation of misacylated Glu-tRNA(Gln) in chloroplasts and mitochondria. The reaction takes place in the presence of glutamine and ATP through an activated gamma-phospho-Glu-tRNA(Gln). The polypeptide is Glutamyl-tRNA(Gln) amidotransferase subunit C, chloroplastic/mitochondrial (Ricinus communis (Castor bean)).